We begin with the raw amino-acid sequence, 136 residues long: Large ribosomal subunit protein bL17 (136 aa).

It belongs to the bacterial ribosomal protein bL17 family. Part of the 50S ribosomal subunit. Contacts protein L32.

This Rickettsia conorii (strain ATCC VR-613 / Malish 7) protein is Large ribosomal subunit protein bL17.